We begin with the raw amino-acid sequence, 79 residues long: Large ribosomal subunit protein eL38 (79 aa).

Belongs to the eukaryotic ribosomal protein eL38 family.

The polypeptide is Large ribosomal subunit protein eL38 (RPL38) (Theileria parva (East coast fever infection agent)).